We begin with the raw amino-acid sequence, 189 residues long: uncharacterized protein (189 aa).

Over residues 105-115 the composition is skewed to basic and acidic residues; it reads EKLEKEEESKT. The segment at 105 to 189 is disordered; that stretch reads EKLEKEEESK…TDDEKTEVST (85 aa). Positions 116-136 are enriched in basic residues; it reads AKKRAKRLRQKAAAKKRKLTK. A compositionally biased stretch (acidic residues) spans 141–151; it reads SDESSSDDSDS. Residues 161 to 177 show a composition bias toward basic and acidic residues; that stretch reads SEGKQNTEVEDKDKVEK. Residues 178–189 show a composition bias toward acidic residues; the sequence is EETDDEKTEVST.

This is an uncharacterized protein from Caenorhabditis elegans.